A 119-amino-acid polypeptide reads, in one-letter code: uncharacterized protein (119 aa).

Positions 78–119 are disordered; that stretch reads SHRKSQQHQTQGNQVLRGTRKLESPTVGPRPGLRRQHTRNFL. The segment covering 84-93 has biased composition (polar residues); that stretch reads QHQTQGNQVL. Over residues 109 to 119 the composition is skewed to basic residues; sequence GLRRQHTRNFL.

This is an uncharacterized protein from Saccharomyces cerevisiae (strain ATCC 204508 / S288c) (Baker's yeast).